The chain runs to 81 residues: Defensin-like protein 115 (81 aa).

The first 24 residues, 1–24 (MAITKKMLVVFLLAFLFVTSSVHC), serve as a signal peptide directing secretion. 4 disulfides stabilise this stretch: C40-C78, C46-C69, C54-C76, and C58-C77.

Belongs to the DEFL family.

Its subcellular location is the secreted. This is Defensin-like protein 115 from Arabidopsis thaliana (Mouse-ear cress).